Consider the following 490-residue polypeptide: Aspartyl/glutamyl-tRNA(Asn/Gln) amidotransferase subunit B (490 aa).

This sequence belongs to the GatB/GatE family. GatB subfamily. Heterotrimer of A, B and C subunits.

It catalyses the reaction L-glutamyl-tRNA(Gln) + L-glutamine + ATP + H2O = L-glutaminyl-tRNA(Gln) + L-glutamate + ADP + phosphate + H(+). It carries out the reaction L-aspartyl-tRNA(Asn) + L-glutamine + ATP + H2O = L-asparaginyl-tRNA(Asn) + L-glutamate + ADP + phosphate + 2 H(+). In terms of biological role, allows the formation of correctly charged Asn-tRNA(Asn) or Gln-tRNA(Gln) through the transamidation of misacylated Asp-tRNA(Asn) or Glu-tRNA(Gln) in organisms which lack either or both of asparaginyl-tRNA or glutaminyl-tRNA synthetases. The reaction takes place in the presence of glutamine and ATP through an activated phospho-Asp-tRNA(Asn) or phospho-Glu-tRNA(Gln). The protein is Aspartyl/glutamyl-tRNA(Asn/Gln) amidotransferase subunit B of Synechococcus sp. (strain JA-2-3B'a(2-13)) (Cyanobacteria bacterium Yellowstone B-Prime).